Consider the following 443-residue polypeptide: Threonine/serine transporter TdcC (443 aa).

11 helical membrane passes run T22 to I42, A44 to F64, G97 to V117, V140 to M160, V163 to I183, I207 to I227, A259 to S279, A319 to L339, L366 to L386, I389 to I409, and D423 to F443.

The protein belongs to the amino acid/polyamine transporter 2 family. SdaC/TdcC subfamily.

It is found in the cell inner membrane. It catalyses the reaction L-threonine(in) + H(+)(in) = L-threonine(out) + H(+)(out). The enzyme catalyses L-serine(in) + H(+)(in) = L-serine(out) + H(+)(out). Its function is as follows. Involved in the import of threonine and serine into the cell, with the concomitant import of a proton (symport system). This chain is Threonine/serine transporter TdcC, found in Klebsiella pneumoniae (strain 342).